Here is a 142-residue protein sequence, read N- to C-terminus: Transcriptional regulator MraZ (142 aa).

SpoVT-AbrB domains follow at residues 5-51 (ASSL…PRTE) and 77-120 (AMDV…DKAT).

The protein belongs to the MraZ family. As to quaternary structure, forms oligomers.

It localises to the cytoplasm. The protein localises to the nucleoid. The protein is Transcriptional regulator MraZ of Delftia acidovorans (strain DSM 14801 / SPH-1).